A 374-amino-acid polypeptide reads, in one-letter code: Cathepsin W (374 aa).

Residues 1 to 21 (MAITVYLSCLLVLSMAGLAQG) form the signal peptide. Positions 22 to 127 (IKSSLRSQDP…EVGSEEWGES (106 aa)) are excised as a propeptide. Intrachain disulfides connect cysteine 150-cysteine 191 and cysteine 184-cysteine 226. Residue cysteine 153 is part of the active site. Asparagine 205 carries N-linked (GlcNAc...) asparagine glycosylation. Residues histidine 291 and asparagine 329 contribute to the active site. The N-linked (GlcNAc...) asparagine glycan is linked to asparagine 347.

It belongs to the peptidase C1 family.

Its subcellular location is the endoplasmic reticulum. Functionally, may have a specific function in the mechanism or regulation of T-cell cytolytic activity. The polypeptide is Cathepsin W (CTSW) (Felis catus (Cat)).